A 25-amino-acid polypeptide reads, in one-letter code: Xenoposin precursor fragment BM1 (25 aa).

In terms of tissue distribution, expressed by the skin glands.

The protein localises to the secreted. Its function is as follows. Antimicrobial peptide. The chain is Xenoposin precursor fragment BM1 from Xenopus boumbaensis (Mawa clawed frog).